We begin with the raw amino-acid sequence, 75 residues long: Alpha-elapitoxin-Bc2c (75 aa).

Residues 1-2 form the signal peptide; the sequence is YT. 5 cysteine pairs are disulfide-bonded: cysteine 5-cysteine 24, cysteine 17-cysteine 45, cysteine 30-cysteine 34, cysteine 49-cysteine 60, and cysteine 61-cysteine 66.

The protein belongs to the three-finger toxin family. Long-chain subfamily. Type II alpha-neurotoxin sub-subfamily. In terms of assembly, monomer in solution, homodimer in crystal state. Expressed by the venom gland.

The protein localises to the secreted. In terms of biological role, binds to muscular and neuronal nicotinic acetylcholine receptor (nAChR) and inhibits acetylcholine from binding to the receptor, thereby impairing neuromuscular and neuronal transmission. Blocks muscle type nAChR. Also binds with high affinity to alpha-7/CHRNA7 nAChRs. In addition, shows a weak inhibition of neuronal alpha-3-beta-2/CHRNA3-CHRNB2 nAChR. Selectively binds to alpha-1-delta subunit interface of the mouse muscle nicotinic acetylcholine receptor, with a 10-fold higher affinity for the adult than for the fetal receptors. In vivo, when intraperitoneally injected into mice, causes flaccid paralysis and respiratory distress, followed by death within 2-4 hours. The polypeptide is Alpha-elapitoxin-Bc2c (Bungarus candidus (Malayan krait)).